Here is a 959-residue protein sequence, read N- to C-terminus: Translation initiation factor IF-2 (959 aa).

The segment covering Met-1–Thr-10 has biased composition (basic and acidic residues). The disordered stretch occupies residues Met-1–Ile-374. Residues Glu-27 to His-37 are compositionally biased toward polar residues. 2 stretches are compositionally biased toward low complexity: residues Ala-63 to Pro-118 and Gln-128 to Pro-138. Basic and acidic residues-rich tracts occupy residues Ser-154–Lys-225 and Ala-232–Arg-241. Residues Gly-246 to Ala-284 show a composition bias toward low complexity. The segment covering Pro-318–Arg-333 has biased composition (basic and acidic residues). Residues Ser-457–Lys-626 enclose the tr-type G domain. The interval Gly-466–Thr-473 is G1. Gly-466–Thr-473 provides a ligand contact to GTP. Residues Gly-491–His-495 are G2. The segment at Asp-512 to Gly-515 is G3. Residues Asp-512–His-516 and Asn-566–Asp-569 each bind GTP. Residues Asn-566–Asp-569 form a G4 region. The interval Ser-602–Lys-604 is G5.

The protein belongs to the TRAFAC class translation factor GTPase superfamily. Classic translation factor GTPase family. IF-2 subfamily.

It is found in the cytoplasm. Functionally, one of the essential components for the initiation of protein synthesis. Protects formylmethionyl-tRNA from spontaneous hydrolysis and promotes its binding to the 30S ribosomal subunits. Also involved in the hydrolysis of GTP during the formation of the 70S ribosomal complex. This Brucella abortus (strain 2308) protein is Translation initiation factor IF-2.